An 893-amino-acid chain; its full sequence is DNA gyrase subunit A (893 aa).

A Topo IIA-type catalytic domain is found at 35–501; it reads LPDVRDGLKP…GLEDLEDEDL (467 aa). The active-site O-(5'-phospho-DNA)-tyrosine intermediate is the tyrosine 123. The GyrA-box signature appears at 528-534; that stretch reads QNRGGRG. Positions 810 to 893 are disordered; it reads VNEEDDNEEN…ASDNEEDSDE (84 aa). Composition is skewed to acidic residues over residues 812 to 821 and 852 to 862; these read EEDDNEENAD and DAEMESVESPE. Residues 863 to 879 show a composition bias toward basic and acidic residues; it reads NDDRIDIRQDFMDRVNE. Residues 880–893 show a composition bias toward acidic residues; it reads DIESASDNEEDSDE.

This sequence belongs to the type II topoisomerase GyrA/ParC subunit family. As to quaternary structure, heterotetramer, composed of two GyrA and two GyrB chains. In the heterotetramer, GyrA contains the active site tyrosine that forms a transient covalent intermediate with DNA, while GyrB binds cofactors and catalyzes ATP hydrolysis.

It localises to the cytoplasm. The catalysed reaction is ATP-dependent breakage, passage and rejoining of double-stranded DNA.. In terms of biological role, a type II topoisomerase that negatively supercoils closed circular double-stranded (ds) DNA in an ATP-dependent manner to modulate DNA topology and maintain chromosomes in an underwound state. Negative supercoiling favors strand separation, and DNA replication, transcription, recombination and repair, all of which involve strand separation. Also able to catalyze the interconversion of other topological isomers of dsDNA rings, including catenanes and knotted rings. Type II topoisomerases break and join 2 DNA strands simultaneously in an ATP-dependent manner. In Staphylococcus epidermidis (strain ATCC 12228 / FDA PCI 1200), this protein is DNA gyrase subunit A.